The chain runs to 176 residues: Isopentenyl-diphosphate Delta-isomerase (176 aa).

The Mn(2+) site is built by histidine 22 and histidine 28. The region spanning 26–160 is the Nudix hydrolase domain; the sequence is LRHKAISVFI…PETFTPWLHI (135 aa). The active site involves cysteine 62. Histidine 64 is a Mn(2+) binding site. Glutamate 82 serves as a coordination point for Mg(2+). Glutamate 108 and glutamate 110 together coordinate Mn(2+). Glutamate 110 is an active-site residue.

The protein belongs to the IPP isomerase type 1 family. Mg(2+) is required as a cofactor. The cofactor is Mn(2+).

Its subcellular location is the cytoplasm. It carries out the reaction isopentenyl diphosphate = dimethylallyl diphosphate. Its pathway is isoprenoid biosynthesis; dimethylallyl diphosphate biosynthesis; dimethylallyl diphosphate from isopentenyl diphosphate: step 1/1. It participates in porphyrin-containing compound metabolism; chlorophyll biosynthesis. In terms of biological role, catalyzes the 1,3-allylic rearrangement of the homoallylic substrate isopentenyl (IPP) to its highly electrophilic allylic isomer, dimethylallyl diphosphate (DMAPP). The protein is Isopentenyl-diphosphate Delta-isomerase of Jannaschia sp. (strain CCS1).